Here is a 941-residue protein sequence, read N- to C-terminus: Isoleucine--tRNA ligase (941 aa).

Positions 59–69 (PYANGNIHIGH) match the 'HIGH' region motif. Glu562 contributes to the L-isoleucyl-5'-AMP binding site. Positions 603–607 (KMSKS) match the 'KMSKS' region motif. Position 606 (Lys606) interacts with ATP. 4 residues coordinate Zn(2+): Cys904, Cys907, Cys924, and Cys927.

It belongs to the class-I aminoacyl-tRNA synthetase family. IleS type 1 subfamily. In terms of assembly, monomer. Zn(2+) serves as cofactor.

It localises to the cytoplasm. The enzyme catalyses tRNA(Ile) + L-isoleucine + ATP = L-isoleucyl-tRNA(Ile) + AMP + diphosphate. Catalyzes the attachment of isoleucine to tRNA(Ile). As IleRS can inadvertently accommodate and process structurally similar amino acids such as valine, to avoid such errors it has two additional distinct tRNA(Ile)-dependent editing activities. One activity is designated as 'pretransfer' editing and involves the hydrolysis of activated Val-AMP. The other activity is designated 'posttransfer' editing and involves deacylation of mischarged Val-tRNA(Ile). The polypeptide is Isoleucine--tRNA ligase (Haemophilus influenzae (strain PittGG)).